The chain runs to 124 residues: S-adenosylmethionine decarboxylase proenzyme (124 aa).

S63 functions as the Schiff-base intermediate with substrate; via pyruvic acid in the catalytic mechanism. S63 carries the pyruvic acid (Ser); by autocatalysis modification. H68 (proton acceptor; for processing activity) is an active-site residue. The Proton donor; for catalytic activity role is filled by C83.

It belongs to the prokaryotic AdoMetDC family. Type 1 subfamily. In terms of assembly, heterotetramer of two alpha and two beta chains arranged as a dimer of alpha/beta heterodimers. Pyruvate is required as a cofactor. Is synthesized initially as an inactive proenzyme. Formation of the active enzyme involves a self-maturation process in which the active site pyruvoyl group is generated from an internal serine residue via an autocatalytic post-translational modification. Two non-identical subunits are generated from the proenzyme in this reaction, and the pyruvate is formed at the N-terminus of the alpha chain, which is derived from the carboxyl end of the proenzyme. The post-translation cleavage follows an unusual pathway, termed non-hydrolytic serinolysis, in which the side chain hydroxyl group of the serine supplies its oxygen atom to form the C-terminus of the beta chain, while the remainder of the serine residue undergoes an oxidative deamination to produce ammonia and the pyruvoyl group blocking the N-terminus of the alpha chain.

The catalysed reaction is S-adenosyl-L-methionine + H(+) = S-adenosyl 3-(methylsulfanyl)propylamine + CO2. It participates in amine and polyamine biosynthesis; S-adenosylmethioninamine biosynthesis; S-adenosylmethioninamine from S-adenosyl-L-methionine: step 1/1. Functionally, catalyzes the decarboxylation of S-adenosylmethionine to S-adenosylmethioninamine (dcAdoMet), the propylamine donor required for the synthesis of the polyamines spermine and spermidine from the diamine putrescine. This Thermoanaerobacter pseudethanolicus (strain ATCC 33223 / 39E) (Clostridium thermohydrosulfuricum) protein is S-adenosylmethionine decarboxylase proenzyme.